The following is a 486-amino-acid chain: Deleted in azoospermia protein 3 (486 aa).

Polar residues predominate over residues 1–10 (MSAANPETPN). The interval 1–27 (MSAANPETPNSTISREASTQSSSAAAS) is disordered. The segment covering 11 to 27 (STISREASTQSSSAAAS) has biased composition (low complexity). The 76-residue stretch at 40 to 115 (NTVFVGGIDA…KKLKLGPAIR (76 aa)) folds into the RRM domain. 12 DAZ domains span residues 167–190 (AYSAYPHSPGQVITGCQLLVYNYQ), 191–214 (EYPTYPDSAFQVTTGYQLPVYNYQ), 215–238 (PFPAYPRSPFQVTAGYQLPVYNYQ), 239–262 (AFPAYPNSPFQVATGYQFPVYNYQ), 263–286 (PFPAYPSSPFQVTAGYQLPVYNYQ), 287–310 (AFPAYPNSPFQVATGYQFPVYNYQ), 311–334 (AFPAYPNSPVQVTTGYQLPVYNYQ), 335–358 (AFPAYPNSPFQVATGYQFPVYNYQ), 359–382 (AFPAYPNSPVQVTTGYQLPVYNYQ), 383–406 (AFPAYPNSPFQVATGYQFPVYNYQ), 407–430 (AFPAYPNSPVQVTTGYQLPVYNYQ), and 431–454 (AFPAYPNSAVQVTTGYQFHVYNYQ).

Belongs to the RRM DAZ family. In terms of assembly, forms a heterodimer with BOLL and DAZL. Interacts with PUM2, DAZAP1, DAZAP2, DZIP1 and DZIP3. In terms of tissue distribution, testis specific.

Its subcellular location is the cytoplasm. The protein localises to the nucleus. Its function is as follows. RNA-binding protein that plays an essential role in spermatogenesis. May act by binding to the 3'-UTR of mRNAs and regulating their translation. This is Deleted in azoospermia protein 3 (DAZ3) from Homo sapiens (Human).